A 38-amino-acid polypeptide reads, in one-letter code: MKVRTSVRKLCRNCKIVKRNRVIRVLCSVDAKHKQRQG.

This sequence belongs to the bacterial ribosomal protein bL36 family.

This Wigglesworthia glossinidia brevipalpis protein is Large ribosomal subunit protein bL36.